We begin with the raw amino-acid sequence, 100 residues long: NAD(P)H-quinone oxidoreductase subunit 4L, chloroplastic (100 aa).

Transmembrane regions (helical) follow at residues 1–21, 29–49, and 63–83; these read MFGHALLLGAFPFCIGIYGLI, ALMCLELIFNAVNVNFVTFPN, and VFVIAVAAAEAAIGSAIVLAI.

The protein belongs to the complex I subunit 4L family. As to quaternary structure, NDH is composed of at least 16 different subunits, 5 of which are encoded in the nucleus.

It localises to the plastid. The protein resides in the chloroplast thylakoid membrane. It catalyses the reaction a plastoquinone + NADH + (n+1) H(+)(in) = a plastoquinol + NAD(+) + n H(+)(out). It carries out the reaction a plastoquinone + NADPH + (n+1) H(+)(in) = a plastoquinol + NADP(+) + n H(+)(out). Its function is as follows. NDH shuttles electrons from NAD(P)H:plastoquinone, via FMN and iron-sulfur (Fe-S) centers, to quinones in the photosynthetic chain and possibly in a chloroplast respiratory chain. The immediate electron acceptor for the enzyme in this species is believed to be plastoquinone. Couples the redox reaction to proton translocation, and thus conserves the redox energy in a proton gradient. This chain is NAD(P)H-quinone oxidoreductase subunit 4L, chloroplastic, found in Huperzia lucidula (Shining clubmoss).